Here is a 305-residue protein sequence, read N- to C-terminus: uncharacterized protein (305 aa).

Residues 8-28 (IGALVTAVIAIGIVFSHMILF) form a helical membrane-spanning segment.

It localises to the membrane. This is an uncharacterized protein from Bacillus subtilis (strain 168).